Here is a 688-residue protein sequence, read N- to C-terminus: DNA ligase (688 aa).

NAD(+)-binding positions include 51-55 (DSEYD), 100-101 (SL), and Glu-129. Lys-131 functions as the N6-AMP-lysine intermediate in the catalytic mechanism. Positions 152, 189, 308, and 332 each coordinate NAD(+). Residues Cys-426, Cys-429, Cys-444, and Cys-450 each coordinate Zn(2+). The BRCT domain occupies 609–688 (ADEQPLKGQT…DELLALLANS (80 aa)).

This sequence belongs to the NAD-dependent DNA ligase family. LigA subfamily. Mg(2+) is required as a cofactor. Mn(2+) serves as cofactor.

It carries out the reaction NAD(+) + (deoxyribonucleotide)n-3'-hydroxyl + 5'-phospho-(deoxyribonucleotide)m = (deoxyribonucleotide)n+m + AMP + beta-nicotinamide D-nucleotide.. Its function is as follows. DNA ligase that catalyzes the formation of phosphodiester linkages between 5'-phosphoryl and 3'-hydroxyl groups in double-stranded DNA using NAD as a coenzyme and as the energy source for the reaction. It is essential for DNA replication and repair of damaged DNA. This Shewanella sp. (strain MR-4) protein is DNA ligase.